Here is a 155-residue protein sequence, read N- to C-terminus: Small ribosomal subunit protein uS7cz/uS7cy (155 aa).

The protein belongs to the universal ribosomal protein uS7 family. In terms of assembly, part of the 30S ribosomal subunit.

The protein resides in the plastid. It localises to the chloroplast. One of the primary rRNA binding proteins, it binds directly to 16S rRNA where it nucleates assembly of the head domain of the 30S subunit. The polypeptide is Small ribosomal subunit protein uS7cz/uS7cy (rps7-A) (Piper cenocladum (Ant piper)).